The following is a 97-amino-acid chain: Single insulin-like growth factor-binding domain protein-1 (97 aa).

The signal sequence occupies residues 1 to 19; it reads MKTLFVFAVGIMLSMRASA. The 77-residue stretch at 20–96 folds into the IGFBP N-terminal domain; sequence FTCPECRPEL…PEIVGTCVKI (77 aa). An O-linked (GalNAc...) threonine glycan is attached at T21. 6 disulfides stabilise this stretch: C22/C45, C25/C47, C30/C48, C36/C51, C59/C75, and C69/C93.

In terms of tissue distribution, expressed in hemocytes.

It is found in the secreted. Its function is as follows. Has a role in the innate immune system. The chain is Single insulin-like growth factor-binding domain protein-1 from Cupiennius salei (American wandering spider).